We begin with the raw amino-acid sequence, 240 residues long: Uridylate kinase (240 aa).

12–15 (KLSG) contacts ATP. The involved in allosteric activation by GTP stretch occupies residues 20–25 (GEKGFG). A UMP-binding site is contributed by Gly-54. Residues Gly-55 and Arg-59 each contribute to the ATP site. UMP-binding positions include Asp-74 and 135–142 (TGSPYFST). ATP-binding residues include Asn-163, Tyr-169, and Asp-172.

It belongs to the UMP kinase family. In terms of assembly, homohexamer.

The protein resides in the cytoplasm. It catalyses the reaction UMP + ATP = UDP + ADP. The protein operates within pyrimidine metabolism; CTP biosynthesis via de novo pathway; UDP from UMP (UMPK route): step 1/1. Its activity is regulated as follows. Allosterically activated by GTP. Inhibited by UTP. Catalyzes the reversible phosphorylation of UMP to UDP. This chain is Uridylate kinase, found in Limosilactobacillus reuteri (Lactobacillus reuteri).